We begin with the raw amino-acid sequence, 264 residues long: Ribosome-recycling factor, mitochondrial (264 aa).

The protein belongs to the RRF family.

The protein localises to the mitochondrion. Its function is as follows. Necessary for protein synthesis in mitochondria. Functions as a ribosome recycling factor in mitochondria. The protein is Ribosome-recycling factor, mitochondrial (RRF1) of Yarrowia lipolytica (strain CLIB 122 / E 150) (Yeast).